A 121-amino-acid chain; its full sequence is Large ribosomal subunit protein uL18 (121 aa).

It belongs to the universal ribosomal protein uL18 family. In terms of assembly, part of the 50S ribosomal subunit; part of the 5S rRNA/L5/L18/L25 subcomplex. Contacts the 5S and 23S rRNAs.

This is one of the proteins that bind and probably mediate the attachment of the 5S RNA into the large ribosomal subunit, where it forms part of the central protuberance. In Paraburkholderia phymatum (strain DSM 17167 / CIP 108236 / LMG 21445 / STM815) (Burkholderia phymatum), this protein is Large ribosomal subunit protein uL18.